The primary structure comprises 347 residues: Aspartate-semialdehyde dehydrogenase (347 aa).

NADP(+) is bound by residues T13–V16 and R41–S42. Residue R101 participates in phosphate binding. C132 acts as the Acyl-thioester intermediate in catalysis. Residue Q159 coordinates substrate. S162 to G163 serves as a coordination point for NADP(+). K216 lines the phosphate pocket. A substrate-binding site is contributed by R238. The Proton acceptor role is filled by H245. NADP(+) is bound at residue N319.

It belongs to the aspartate-semialdehyde dehydrogenase family. Homodimer.

The enzyme catalyses L-aspartate 4-semialdehyde + phosphate + NADP(+) = 4-phospho-L-aspartate + NADPH + H(+). Its pathway is amino-acid biosynthesis; L-lysine biosynthesis via DAP pathway; (S)-tetrahydrodipicolinate from L-aspartate: step 2/4. It functions in the pathway amino-acid biosynthesis; L-methionine biosynthesis via de novo pathway; L-homoserine from L-aspartate: step 2/3. The protein operates within amino-acid biosynthesis; L-threonine biosynthesis; L-threonine from L-aspartate: step 2/5. In terms of biological role, catalyzes the NADPH-dependent formation of L-aspartate-semialdehyde (L-ASA) by the reductive dephosphorylation of L-aspartyl-4-phosphate. The protein is Aspartate-semialdehyde dehydrogenase of Legionella pneumophila.